Reading from the N-terminus, the 329-residue chain is Haptoglobin (329 aa).

Residue Asn-9 is glycosylated (N-linked (GlcNAc...) asparagine). The 58-residue stretch at 13–70 (VSLPKPPVIENGYVEHMIRYQCKPFYKLHTEGDGVYTLNSEKHWTNKAVGEKLPECEA) folds into the Sushi domain. 2 cysteine pairs are disulfide-bonded: Cys-34–Cys-68 and Cys-72–Cys-189. A propeptide is located at residue Arg-84. Residues 85-327 (IMGGSVDAKG…VLAWVQETIA (243 aa)) enclose the Peptidase S1 domain. Residues Asn-107 and Asn-214 are each glycosylated (N-linked (GlcNAc...) asparagine). Disulfide bonds link Cys-232–Cys-263 and Cys-274–Cys-304. An interaction with CD163 region spans residues 241–246 (VPEKKS).

The protein belongs to the peptidase S1 family. In terms of assembly, tetramer of two alpha and two beta chains; disulfide-linked. The hemoglobin/haptoglobin complex is composed of a haptoglobin dimer bound to two hemoglobin alpha-beta dimers. Interacts with CD163. Interacts with ERGIC3. As to expression, expressed by the liver and secreted in plasma.

Its subcellular location is the secreted. The protein resides in the extracellular space. Functionally, as a result of hemolysis, hemoglobin is found to accumulate in the kidney and is secreted in the urine. Haptoglobin captures, and combines with free plasma hemoglobin to allow hepatic recycling of heme iron and to prevent kidney damage. Haptoglobin also acts as an antioxidant, has antibacterial activity and plays a role in modulating many aspects of the acute phase response. Hemoglobin/haptoglobin complexes are rapidly cleared by the macrophage CD163 scavenger receptor expressed on the surface of liver Kupfer cells through an endocytic lysosomal degradation pathway. The protein is Haptoglobin (HP) of Canis lupus familiaris (Dog).